Consider the following 366-residue polypeptide: Apolipoprotein A-V (366 aa).

Residues 1-23 (MASMAAVLTWALALLSAFSATQA) form the signal peptide. Coiled coils occupy residues 54–157 (ATLK…VGED) and 236–262 (TLKA…RAFA). Threonine 55 is subject to Phosphothreonine; by FAM20C. Residue serine 59 is modified to Phosphoserine.

Belongs to the apolipoprotein A1/A4/E family. Interacts with GPIHBP1. Interacts with SORL1; this interaction leads to APOA5 internalization and sorting either to lysosomes and degradation, or to the trans-Golgi network. Phosphorylated by FAM20C in the extracellular medium. In terms of tissue distribution, liver and plasma.

It localises to the secreted. The protein localises to the early endosome. It is found in the late endosome. The protein resides in the golgi apparatus. Its subcellular location is the trans-Golgi network. Its function is as follows. Minor apolipoprotein mainly associated with HDL and to a lesser extent with VLDL. May also be associated with chylomicrons. Important determinant of plasma triglyceride (TG) levels by both being a potent stimulator of apo-CII lipoprotein lipase (LPL) TG hydrolysis and an inhibitor of the hepatic VLDL-TG production rate (without affecting the VLDL-apoB production rate). Activates poorly lecithin:cholesterol acyltransferase (LCAT) and does not enhance efflux of cholesterol from macrophages. Binds heparin. This is Apolipoprotein A-V (APOA5) from Homo sapiens (Human).